We begin with the raw amino-acid sequence, 413 residues long: Protein trichome birefringence-like 9 (413 aa).

A helical; Signal-anchor for type II membrane protein membrane pass occupies residues 22-42 (LFVSLFLLSLLIFSTVVVDVM). The short motif at 141 to 143 (GDS) is the GDS motif element. The short motif at 384-398 (DCSHWCLPGVPDTWN) is the DCXHWCLPGXXDXWN motif element.

The protein belongs to the PC-esterase family. TBL subfamily.

Its subcellular location is the membrane. May act as a bridging protein that binds pectin and other cell wall polysaccharides. Probably involved in maintaining esterification of pectins. May be involved in the specific O-acetylation of cell wall polymers. The polypeptide is Protein trichome birefringence-like 9 (TBL9) (Arabidopsis thaliana (Mouse-ear cress)).